A 519-amino-acid chain; its full sequence is MSLASTLPRASFETLLQHTNFMDGIKFVFFAFVVYSCFTIAVGWVVYEWKRKAHGCGKIPRYPHRDPFFGFDIVFGMAKSLRNDYFLVWLNKVHENLPKTFLVNFVGTRFIYTIEPENMKSMSAINWQDFAVGPMRRNNKATAPFADKGVNTVDGHEWEFSRFLIKPFFKRETFTDTSRLTLHVDRVLEQLPADGETVNIQPLIQRWFLDVTTASLFGESIESLVYPERAPICWAMVDVLRGLRLRLQWYKYLWLFRHQAWLDAVEVVHRYLNAHIDRTYKELDEYKRQGKNPEAADRNDLLWYMASNLQDKEALRSQICLIFVPNNDTTSIFISHILWNLARHPGIYEKCRQEVLALGDAELSFSVLRNMKYLNAVLNETHRLFPNGVTQVRKCIRDTTLPVGGGPDGKQPIFVRKGDVVQVNKNVIHRDHDIWGPDAEDFRPERWENLRPYWNFVPFGGGPRRCPAQMLVTAEASYFLARLMRVYKRIEARDPNPYVGVMRVGPSNKTGVHIALFKE.

Residues 27–47 (FVFFAFVVYSCFTIAVGWVVY) traverse the membrane as a helical segment. Asn-327 and Asn-379 each carry an N-linked (GlcNAc...) asparagine glycan. Cys-466 contributes to the heme binding site. Asn-508 carries an N-linked (GlcNAc...) asparagine glycan.

It belongs to the cytochrome P450 family. It depends on heme as a cofactor.

The protein localises to the membrane. It functions in the pathway secondary metabolite biosynthesis. In terms of biological role, cytochrome P450 monooxygenase; part of the gene cluster that mediates the biosynthesis of aspyridones. The polyketide-amino acid backbone preaspyridone A is first assembled by the PKS-NRPS hybrid apdA. The assembly of preaspyridone A is initiated by loading of malonyl-CoA onto apdA, followed by decarboxylation to yield the acetyl starter unit. The growing polyketide chain then elongates into a tetraketide. The adpA PKS module catalyzes three Claisen condensations, as well as beta-keto processing and methylation. Alpha-methylation step during polyketide synthesis is a prerequisite and a key checkpoint for chain transfer between PKS and NRPS modules. The downstream NRPS module contains the condensation (C), adenylation (A), and thiolation (T) domains and catalyzes the incorporation of tyrosine via the formation of the L-tyrosinyl-thioester and the amide linkage between L-tyrosinyl-thioester and the tetraketide. The bimodular assembly line is terminated with a reductase (R) domain that facilitates formation and release of the tetramic acid product. Because apdA lacks a designated enoylreductase (ER) domain, the required activity is provided the enoyl reductase apdC. ApdC appears to operate with different stereoselectivity in different PKS cycle. Combined with apdC, apdA is proposed to synthesize preaspyridone A via about 20 enzymatic steps. A number of oxidative steps performed successively by the cytochrome P450 monooxygenases apdE and apdB are required for the conversion of preaspyridone A to aspyridone A. The cytochrome P450 monooxygenase apdE is responsible for the oxidative dephenylation of preaspyridone A. Finally, the predicted FAD-dependent monooxygenase apdD and the acyl-CoA dehydrogenase apdG may be involved in the transformation of aspyridone A into aspyridone B. The protein is Cytochrome P450 monooxygenase apdE of Emericella nidulans (strain FGSC A4 / ATCC 38163 / CBS 112.46 / NRRL 194 / M139) (Aspergillus nidulans).